An 84-amino-acid chain; its full sequence is Putative glutaredoxin MT3292 (84 aa).

Residues 1-84 form the Glutaredoxin domain; the sequence is MITAALTIYT…VKAKLVKIAG (84 aa).

In Mycobacterium tuberculosis (strain CDC 1551 / Oshkosh), this protein is Putative glutaredoxin MT3292.